Here is a 366-residue protein sequence, read N- to C-terminus: MTKITLSDLPLREELRGEHAYGAPQLNVDIRLNTNENPYPPSEALVADLVATVDKIATELNRYPERDAVELRDELAAYITKQTGVAVTRDNLWAANGSNEILQQLLQAFGGPGRTALGFQPSYSMHPILAKGTHTEFIAVSRGADFRIDMDVALEEIRAKQPDIVFVTTPNNPTGDVTSLDDVERIINVAPGIVIVDEAYAEFSPSPSATTLLEKYPTKLVVSRTMSKAFDFAGGRLGYFVANPAFIDAVMLVRLPYHLSALSQAAAIVALRHSADTLGTVEKLSVERVRVAARLEELGYAVVPSESNFVFFGDFSDQHAAWQAFLDRGVLIRDVGIAGHLRTTIGVPEENDAFLDAAAEIIKLNL.

N6-(pyridoxal phosphate)lysine is present on lysine 228.

This sequence belongs to the class-II pyridoxal-phosphate-dependent aminotransferase family. Histidinol-phosphate aminotransferase subfamily. Homodimer. It depends on pyridoxal 5'-phosphate as a cofactor.

The enzyme catalyses L-histidinol phosphate + 2-oxoglutarate = 3-(imidazol-4-yl)-2-oxopropyl phosphate + L-glutamate. The protein operates within amino-acid biosynthesis; L-histidine biosynthesis; L-histidine from 5-phospho-alpha-D-ribose 1-diphosphate: step 7/9. The protein is Histidinol-phosphate aminotransferase of Corynebacterium glutamicum (strain ATCC 13032 / DSM 20300 / JCM 1318 / BCRC 11384 / CCUG 27702 / LMG 3730 / NBRC 12168 / NCIMB 10025 / NRRL B-2784 / 534).